The chain runs to 438 residues: Mitochondrial distribution and morphology protein 12 (438 aa).

One can recognise an SMP-LTD domain in the interval 1–438 (MSIEVDWAAA…VYPSFWTFLV (438 aa)). Disordered stretches follow at residues 110 to 154 (SFSH…TSTL), 185 to 277 (SDSG…MRER), and 353 to 379 (GSEQ…KDKE). Over residues 212–226 (DTTNSTSRPSTANTL) the composition is skewed to polar residues. Residues 227–245 (PSHPSLGHSGSSGSNPHTS) are compositionally biased toward low complexity. The span at 354 to 364 (SEQSQGSQNPS) shows a compositional bias: polar residues. The span at 365–379 (DDGRPRSGGDQKDKE) shows a compositional bias: basic and acidic residues.

This sequence belongs to the MDM12 family. Component of the ER-mitochondria encounter structure (ERMES) or MDM complex, composed of mmm1, mdm10, mdm12 and mdm34. A mmm1 homodimer associates with one molecule of mdm12 on each side in a pairwise head-to-tail manner, and the SMP-LTD domains of mmm1 and mdm12 generate a continuous hydrophobic tunnel for phospholipid trafficking.

It localises to the mitochondrion outer membrane. Its subcellular location is the endoplasmic reticulum membrane. In terms of biological role, component of the ERMES/MDM complex, which serves as a molecular tether to connect the endoplasmic reticulum (ER) and mitochondria. Components of this complex are involved in the control of mitochondrial shape and protein biogenesis, and function in nonvesicular lipid trafficking between the ER and mitochondria. Mdm12 is required for the interaction of the ER-resident membrane protein mmm1 and the outer mitochondrial membrane-resident beta-barrel protein mdm10. The mdm12-mmm1 subcomplex functions in the major beta-barrel assembly pathway that is responsible for biogenesis of all mitochondrial outer membrane beta-barrel proteins, and acts in a late step after the SAM complex. The mdm10-mdm12-mmm1 subcomplex further acts in the TOM40-specific pathway after the action of the mdm12-mmm1 complex. Essential for establishing and maintaining the structure of mitochondria and maintenance of mtDNA nucleoids. This Penicillium rubens (strain ATCC 28089 / DSM 1075 / NRRL 1951 / Wisconsin 54-1255) (Penicillium chrysogenum) protein is Mitochondrial distribution and morphology protein 12.